The chain runs to 669 residues: p135Gag-Myb-Ets-transforming protein (669 aa).

Positions Asn1–Gln10 are enriched in basic and acidic residues. Disordered regions lie at residues Asn1–Thr27 and Thr132–Thr153. The segment at Pro90–Trp142 is transcriptional activation domain. Residues Ala276 to Glu361 form the PNT domain. The segment at residues Gly556–Val640 is a DNA-binding region (ETS).

The protein resides in the host nucleus. In terms of biological role, DNA-binding protein that specifically recognizes the sequence 5'-YAAC[GT]G-3'. The Myb-Ets protein induces predominantly erythroblastosis in chicken and transforms avian erythroblasts and immature myelomonocytic cells in culture. It appears that the Ets domain is responsible for the effects on erythroid cells and that the Myb domain encodes the myeloid-transforming capacity. The polypeptide is p135Gag-Myb-Ets-transforming protein (GAG) (Avian leukemia virus E26).